A 190-amino-acid chain; its full sequence is Succinate dehydrogenase assembly factor 2, mitochondrial (190 aa).

Belongs to the SDHAF2 family. Interacts with the flavoprotein subunit within the SDH catalytic dimer.

Its subcellular location is the mitochondrion matrix. Its function is as follows. Plays an essential role in the assembly of succinate dehydrogenase (SDH), an enzyme complex (also referred to as respiratory complex II) that is a component of both the tricarboxylic acid (TCA) cycle and the mitochondrial electron transport chain, and which couples the oxidation of succinate to fumarate with the reduction of ubiquinone (coenzyme Q) to ubiquinol. Required for flavinylation (covalent attachment of FAD) of the flavoprotein subunit of the SDH catalytic dimer. The protein is Succinate dehydrogenase assembly factor 2, mitochondrial of Komagataella phaffii (strain GS115 / ATCC 20864) (Yeast).